We begin with the raw amino-acid sequence, 136 residues long: Piercer of microtubule wall 1 protein (136 aa).

Residues 1–16 (MSEEDPKACAEPEEPK) show a composition bias toward basic and acidic residues. Residues 1–27 (MSEEDPKACAEPEEPKAGPPPEKTSDW) are disordered.

It belongs to the PIERCE1 family. Microtubule inner protein component of sperm flagellar doublet microtubules. Interacts with CFAP53, ODAD1 and ODAD3; the interactions link the outer dynein arms docking complex (ODA-DC) to the internal microtubule inner proteins (MIP) in cilium axoneme. In terms of tissue distribution, expressed in trachea multiciliated cells.

It is found in the cytoplasm. The protein localises to the cytoskeleton. It localises to the cilium axoneme. The protein resides in the flagellum axoneme. Microtubule inner protein involved in the attachment of outer dynein arms (ODAs) to dynein-decorated doublet microtubules (DMTs) in cilia axoneme, which is required for motile cilia beating. Functions at the initial step of left-right asymmetry specification of the visceral organs. This is Piercer of microtubule wall 1 protein (PIERCE1) from Bos taurus (Bovine).